We begin with the raw amino-acid sequence, 68 residues long: Large ribosomal subunit protein bL33c (68 aa).

The protein belongs to the bacterial ribosomal protein bL33 family.

It localises to the plastid. The polypeptide is Large ribosomal subunit protein bL33c (Cuscuta reflexa (Southern Asian dodder)).